The chain runs to 638 residues: Nitrous-oxide reductase (638 aa).

Residues 1 to 52 (MSDKDSKNTPQVPEKLGLSRRGFLGASAVTGAAVAATALGGAVMTRESWAQA) constitute a signal peptide (tat-type signal). 3 residues coordinate Cu cation: His129, His130, and His178. Ca(2+) is bound by residues Tyr256, Glu259, Met267, Asp273, and Asn324. Positions 326, 382, and 433 each coordinate Cu cation. Residues Lys454 and Glu469 each contribute to the Ca(2+) site. Cu cation contacts are provided by His494, His583, Cys618, Trp620, Cys622, His626, and Met629. The interval 542–638 (NKVRVYMTSM…MVGRMMVEPA (97 aa)) is COX2-like.

This sequence belongs to the NosZ family. It in the C-terminal section; belongs to the cytochrome c oxidase subunit 2 family. As to quaternary structure, homodimer. The cofactor is Ca(2+). Cu cation serves as cofactor. Post-translationally, predicted to be exported by the Tat system. The position of the signal peptide cleavage has not been experimentally proven. The N-terminus is blocked.

The protein localises to the periplasm. The catalysed reaction is N2 + 2 Fe(III)-[cytochrome c] + H2O = nitrous oxide + 2 Fe(II)-[cytochrome c] + 2 H(+). It participates in nitrogen metabolism; nitrate reduction (denitrification); dinitrogen from nitrate: step 4/4. Its function is as follows. Nitrous-oxide reductase is part of a bacterial respiratory system which is activated under anaerobic conditions in the presence of nitrate or nitrous oxide. The polypeptide is Nitrous-oxide reductase (nosZ) (Stutzerimonas stutzeri (Pseudomonas stutzeri)).